The following is a 32-amino-acid chain: Toxic phospholipase A2 (32 aa).

Belongs to the phospholipase A2 family. Group III subfamily. It depends on Ca(2+) as a cofactor.

Its subcellular location is the secreted. It is found in the nematocyst. It catalyses the reaction a 1,2-diacyl-sn-glycero-3-phosphocholine + H2O = a 1-acyl-sn-glycero-3-phosphocholine + a fatty acid + H(+). PLA2 catalyzes the calcium-dependent hydrolysis of the 2-acyl groups in 3-sn-phosphoglycerides. This chain is Toxic phospholipase A2, found in Rhopilema nomadica (Mediteranean medusa).